A 270-amino-acid polypeptide reads, in one-letter code: Putative hydro-lyase H16_B1759 (270 aa).

Belongs to the D-glutamate cyclase family.

This chain is Putative hydro-lyase H16_B1759, found in Cupriavidus necator (strain ATCC 17699 / DSM 428 / KCTC 22496 / NCIMB 10442 / H16 / Stanier 337) (Ralstonia eutropha).